The primary structure comprises 84 residues: Large ribosomal subunit protein bL27 (84 aa).

The tract at residues 1-21 (MAHKKGAGSTKNGRDSKPKML) is disordered.

The protein belongs to the bacterial ribosomal protein bL27 family.

This Dehalococcoides mccartyi (strain ATCC BAA-2100 / JCM 16839 / KCTC 5957 / BAV1) protein is Large ribosomal subunit protein bL27.